We begin with the raw amino-acid sequence, 213 residues long: Pyridoxine/pyridoxamine 5'-phosphate oxidase (213 aa).

Substrate-binding positions include 10-13 and lysine 68; that span reads REEY. FMN is bound by residues 63-68, 78-79, lysine 85, and glutamine 107; these read RMLLLK and FT. Positions 125, 129, and 133 each coordinate substrate. FMN is bound by residues 142-143 and tryptophan 186; that span reads QS. 192 to 194 lines the substrate pocket; the sequence is RLH. Arginine 196 is a binding site for FMN.

It belongs to the pyridoxamine 5'-phosphate oxidase family. As to quaternary structure, homodimer. Requires FMN as cofactor.

It catalyses the reaction pyridoxamine 5'-phosphate + O2 + H2O = pyridoxal 5'-phosphate + H2O2 + NH4(+). The enzyme catalyses pyridoxine 5'-phosphate + O2 = pyridoxal 5'-phosphate + H2O2. It participates in cofactor metabolism; pyridoxal 5'-phosphate salvage; pyridoxal 5'-phosphate from pyridoxamine 5'-phosphate: step 1/1. It functions in the pathway cofactor metabolism; pyridoxal 5'-phosphate salvage; pyridoxal 5'-phosphate from pyridoxine 5'-phosphate: step 1/1. In terms of biological role, catalyzes the oxidation of either pyridoxine 5'-phosphate (PNP) or pyridoxamine 5'-phosphate (PMP) into pyridoxal 5'-phosphate (PLP). The sequence is that of Pyridoxine/pyridoxamine 5'-phosphate oxidase from Nocardioides sp. (strain ATCC BAA-499 / JS614).